A 148-amino-acid chain; its full sequence is Protein SOB FIVE-LIKE 1 (148 aa).

Basic and acidic residues predominate over residues 1–10; the sequence is MESPRNHGGS. Disordered regions lie at residues 1–20 and 33–148; these read MESPRNHGGSEEEEYSSCES and NDQS…SKTK. The SOFL-A signature appears at 20 to 25; it reads SGWTMY. Residues 54–76 show a composition bias toward acidic residues; it reads DGYENDDGDTSDDGGDEESDDSM. An SOFL-B motif is present at residues 75 to 84; the sequence is SMASDASSGP. The segment covering 91–101 has biased composition (basic residues); sequence HINKHAARKNG. The segment covering 111–128 has biased composition (basic and acidic residues); sequence QHTEKTISNEGEKSDLKA.

This sequence belongs to the SOFL plant protein family. As to expression, predominantly expressed in the vascular tissues of seedlings, developing leaves, flowers and siliques, but barely detectable in roots and stems.

It localises to the cytoplasm. It is found in the nucleus. In terms of biological role, involved in cytokinin-mediated development. Together with SOFL2, triggers the endogenous content of specific bioactive cytokinins derived from the biosynthetic intermediates trans-zeatin riboside monophosphate (tZRMP) and N(6)-(Delta(2)-isopentenyl)adenosine monophosphate (iPRMP) such as N-glucosides trans-zeatin 7-glucoside (tZ7G), cis-zeatin 7-glucoside (cZ7G) and N(6)-(Delta(2)-isopentenyl)adenine 7-glucoside (iP7G). The protein is Protein SOB FIVE-LIKE 1 of Arabidopsis thaliana (Mouse-ear cress).